The following is an 881-amino-acid chain: Ribonucleoside-diphosphate reductase large subunit (881 aa).

Residues Thr-69 to Asp-160 enclose the ATP-cone domain. Residues Thr-271, Ser-286 to Cys-287, Gly-315, Asn-493 to Glu-497, and Pro-675 to Thr-679 each bind substrate. Cys-287 and Cys-510 are disulfide-bonded. The active-site Proton acceptor is the Asn-493. The active-site Cysteine radical intermediate is the Cys-495. The active-site Proton acceptor is Glu-497.

It belongs to the ribonucleoside diphosphate reductase large chain family. Heterotetramer composed of a homodimer of the large subunit (R1) and a homodimer of the small subunit (R2). Larger multisubunit protein complex are also active, composed of (R1)n(R2)n.

The catalysed reaction is a 2'-deoxyribonucleoside 5'-diphosphate + [thioredoxin]-disulfide + H2O = a ribonucleoside 5'-diphosphate + [thioredoxin]-dithiol. Its activity is regulated as follows. Under complex allosteric control mediated by deoxynucleoside triphosphates and ATP binding. The type of nucleotide bound at the specificity site determines substrate preference. It seems probable that ATP makes the enzyme reduce CDP and UDP, dGTP favors ADP reduction and dTTP favors GDP reduction. In terms of biological role, ribonucleoside-diphosphate reductase holoenzyme provides the precursors necessary for viral DNA synthesis. Allows virus growth in non-dividing cells. Catalyzes the biosynthesis of deoxyribonucleotides from the corresponding ribonucleotides. The protein is Ribonucleoside-diphosphate reductase large subunit (RNR1) of Acanthamoeba polyphaga mimivirus (APMV).